A 634-amino-acid chain; its full sequence is DNA-directed RNA polymerase subunit gamma (634 aa).

Residues cysteine 74, cysteine 76, cysteine 89, and cysteine 92 each coordinate Zn(2+). Mg(2+) is bound by residues aspartate 471, aspartate 473, and aspartate 475.

The protein belongs to the RNA polymerase beta' chain family. RpoC1 subfamily. As to quaternary structure, in cyanobacteria the RNAP catalytic core is composed of 2 alpha, 1 beta, 1 beta', 1 gamma and 1 omega subunit. When a sigma factor is associated with the core the holoenzyme is formed, which can initiate transcription. Mg(2+) serves as cofactor. It depends on Zn(2+) as a cofactor.

It catalyses the reaction RNA(n) + a ribonucleoside 5'-triphosphate = RNA(n+1) + diphosphate. In terms of biological role, DNA-dependent RNA polymerase catalyzes the transcription of DNA into RNA using the four ribonucleoside triphosphates as substrates. In Synechococcus sp. (strain RCC307), this protein is DNA-directed RNA polymerase subunit gamma.